A 545-amino-acid chain; its full sequence is Ubiquitin carboxyl-terminal hydrolase 17-like protein D (545 aa).

Residues 51-348 (CGLQNTGNSC…NAYVLFYVQQ (298 aa)) form the USP domain. Catalysis depends on C60, which acts as the Nucleophile. H307 (proton acceptor) is an active-site residue. Disordered stretches follow at residues 367–443 (LDPE…KLGQ) and 521–545 (RQEGRRRSKKGKNKNKQGQKLLLVR). Positions 374–385 (KKSRRKKHKKKS) are enriched in basic residues. The segment covering 393–404 (EPSKNREKKATK) has biased composition (basic and acidic residues). Basic residues predominate over residues 524-537 (GRRRSKKGKNKNKQ).

This sequence belongs to the peptidase C19 family. USP17 subfamily. Detected in T-cell, myeloid, and embryonic stem cell lines.

The protein localises to the nucleus. The protein resides in the endoplasmic reticulum. The catalysed reaction is Thiol-dependent hydrolysis of ester, thioester, amide, peptide and isopeptide bonds formed by the C-terminal Gly of ubiquitin (a 76-residue protein attached to proteins as an intracellular targeting signal).. In terms of biological role, deubiquitinating enzyme that removes conjugated ubiquitin from specific proteins to regulate different cellular processes that may include cell proliferation, progression through the cell cycle, apoptosis, cell migration, and the cellular response to viral infection. The polypeptide is Ubiquitin carboxyl-terminal hydrolase 17-like protein D (Mus musculus (Mouse)).